Consider the following 1078-residue polypeptide: DNA gyrase subunit B (1078 aa).

Residues 889 to 974 (GKILNIEKTD…QGYIYIACPP (86 aa)) form the Toprim domain. Glu-895, Asp-939, and Asp-941 together coordinate Mg(2+).

Belongs to the type II topoisomerase GyrB family. Heterotetramer, composed of two GyrA and two GyrB chains. In the heterotetramer, GyrA contains the active site tyrosine that forms a transient covalent intermediate with DNA, while GyrB binds cofactors and catalyzes ATP hydrolysis. Requires Mg(2+) as cofactor. In terms of processing, this protein undergoes a protein self splicing that involves a post-translational excision of the intervening region (intein) followed by peptide ligation.

Its subcellular location is the cytoplasm. The enzyme catalyses ATP-dependent breakage, passage and rejoining of double-stranded DNA.. Functionally, a type II topoisomerase that negatively supercoils closed circular double-stranded (ds) DNA in an ATP-dependent manner to modulate DNA topology and maintain chromosomes in an underwound state. Negative supercoiling favors strand separation, and DNA replication, transcription, recombination and repair, all of which involve strand separation. Also able to catalyze the interconversion of other topological isomers of dsDNA rings, including catenanes and knotted rings. Type II topoisomerases break and join 2 DNA strands simultaneously in an ATP-dependent manner. The chain is DNA gyrase subunit B (gyrB) from Synechocystis sp. (strain ATCC 27184 / PCC 6803 / Kazusa).